A 206-amino-acid chain; its full sequence is Histidine biosynthesis bifunctional protein HisIE (206 aa).

A phosphoribosyl-AMP cyclohydrolase region spans residues 1 to 117 (MCNEPATSDV…SCFPAAPGQF (117 aa)). Residues 118–206 (LGALDALVAE…AVTVLEARHR (89 aa)) are phosphoribosyl-ATP pyrophosphohydrolase.

It in the N-terminal section; belongs to the PRA-CH family. This sequence in the C-terminal section; belongs to the PRA-PH family.

The protein resides in the cytoplasm. It carries out the reaction 1-(5-phospho-beta-D-ribosyl)-ATP + H2O = 1-(5-phospho-beta-D-ribosyl)-5'-AMP + diphosphate + H(+). The enzyme catalyses 1-(5-phospho-beta-D-ribosyl)-5'-AMP + H2O = 1-(5-phospho-beta-D-ribosyl)-5-[(5-phospho-beta-D-ribosylamino)methylideneamino]imidazole-4-carboxamide. The protein operates within amino-acid biosynthesis; L-histidine biosynthesis; L-histidine from 5-phospho-alpha-D-ribose 1-diphosphate: step 2/9. It participates in amino-acid biosynthesis; L-histidine biosynthesis; L-histidine from 5-phospho-alpha-D-ribose 1-diphosphate: step 3/9. The sequence is that of Histidine biosynthesis bifunctional protein HisIE (hisI) from Xylella fastidiosa (strain 9a5c).